Consider the following 428-residue polypeptide: Aspartate--tRNA(Asp) ligase (428 aa).

An L-aspartate-binding site is contributed by Glu166. The tract at residues 188-191 (QLYK) is aspartate. Arg210 lines the L-aspartate pocket. ATP contacts are provided by residues 210-212 (RAE), 218-220 (RHL), and Glu351. Residues Glu351 and Ser354 each coordinate Mg(2+). Ser354 and Arg358 together coordinate L-aspartate. 399–402 (GLER) lines the ATP pocket.

This sequence belongs to the class-II aminoacyl-tRNA synthetase family. Type 2 subfamily. In terms of assembly, homodimer. The cofactor is Mg(2+).

The protein resides in the cytoplasm. It carries out the reaction tRNA(Asp) + L-aspartate + ATP = L-aspartyl-tRNA(Asp) + AMP + diphosphate. Catalyzes the attachment of L-aspartate to tRNA(Asp) in a two-step reaction: L-aspartate is first activated by ATP to form Asp-AMP and then transferred to the acceptor end of tRNA(Asp). This Thermoplasma acidophilum (strain ATCC 25905 / DSM 1728 / JCM 9062 / NBRC 15155 / AMRC-C165) protein is Aspartate--tRNA(Asp) ligase.